The chain runs to 119 residues: Ribonuclease P protein component (119 aa).

Positions 1-24 are disordered; that stretch reads MRGSSRFRPHEKLRASDDYQRVKR. The span at 8–21 shows a compositional bias: basic and acidic residues; that stretch reads RPHEKLRASDDYQR.

Belongs to the RnpA family. Consists of a catalytic RNA component (M1 or rnpB) and a protein subunit.

The catalysed reaction is Endonucleolytic cleavage of RNA, removing 5'-extranucleotides from tRNA precursor.. Functionally, RNaseP catalyzes the removal of the 5'-leader sequence from pre-tRNA to produce the mature 5'-terminus. It can also cleave other RNA substrates such as 4.5S RNA. The protein component plays an auxiliary but essential role in vivo by binding to the 5'-leader sequence and broadening the substrate specificity of the ribozyme. In Syntrophobacter fumaroxidans (strain DSM 10017 / MPOB), this protein is Ribonuclease P protein component.